Here is a 216-residue protein sequence, read N- to C-terminus: Chaperone protein TorD (216 aa).

The protein belongs to the TorD/DmsD family. TorD subfamily.

The protein resides in the cytoplasm. In terms of biological role, involved in the biogenesis of TorA. Acts on TorA before the insertion of the molybdenum cofactor and, as a result, probably favors a conformation of the apoenzyme that is competent for acquiring the cofactor. The chain is Chaperone protein TorD from Ferrimonas balearica (strain DSM 9799 / CCM 4581 / KCTC 23876 / PAT).